Reading from the N-terminus, the 427-residue chain is Glucose-1-phosphate adenylyltransferase (427 aa).

Residues R40, H46, and R52 each coordinate AMP. Y114 contributes to the alpha-D-glucose 1-phosphate binding site. R130 contacts AMP. Residues G179, E194–K195, and S212 each bind alpha-D-glucose 1-phosphate. R386 is an AMP binding site.

Belongs to the bacterial/plant glucose-1-phosphate adenylyltransferase family. In terms of assembly, homotetramer.

The enzyme catalyses alpha-D-glucose 1-phosphate + ATP + H(+) = ADP-alpha-D-glucose + diphosphate. The protein operates within glycan biosynthesis; glycogen biosynthesis. Allosterically activated by fructose-1,6-bisphosphate (F16BP) and inhibited by AMP. Its function is as follows. Involved in the biosynthesis of ADP-glucose, a building block required for the elongation reactions to produce glycogen. Catalyzes the reaction between ATP and alpha-D-glucose 1-phosphate (G1P) to produce pyrophosphate and ADP-Glc. The polypeptide is Glucose-1-phosphate adenylyltransferase (Cronobacter sakazakii (strain ATCC BAA-894) (Enterobacter sakazakii)).